Consider the following 60-residue polypeptide: Mastoparan-B (60 aa).

The first 27 residues, 1–27 (MKNTILILFTAFIALLGFFGMSAEALA), serve as a signal peptide directing secretion. AXPX repeat units follow at residues 27 to 30 (ADPL), 31 to 34 (AEPL), 35 to 38 (ADPN), and 41 to 44 (ADPE). Residues 28–45 (DPLAEPLADPNAEADPEA) constitute a propeptide that is removed on maturation. The residue at position 59 (Leu-59) is a Leucine amide.

The protein belongs to the MCD family. Mastoparan subfamily. In terms of tissue distribution, expressed by the venom gland.

It is found in the secreted. Its subcellular location is the target cell membrane. In terms of biological role, antimicrobial and mast cell degranulating peptide. Has broad spectrum antibacterial activity against both Gram-positive (S.aureus MIC=96-128 ug/ml, S.xylosus MIC=2 ug/ml, S.alactolyticus MIC=32 ug/ml, and S.choleraesuis MIC=32 ug/ml) and Gram-negative bacteria (C.koseri MIC=6 ug/ml, E.coli MIC=3-16 ug/ml, K.pneumoniae MIC=128 ug/ml, P.aerugiosa MIC=128 ug/ml, S.typhimurium MIC=64 ug/ml, V.parahamelytics MIC=32 ug/ml, and S.enterica), as well as on fungi (C.albicans, C.glabrata, and C.neoformans). Does not show antimicrobial activity against S.mutans. Affects membrane permeability of E.coli. Also acts as a mast cell degranulating peptide, that causes liberation of histamine from rat peritoneal mast cells. Its mast cell degranulation activity may be related to the activation of G-protein coupled receptors in mast cells as well as interaction with other proteins located in cell endosomal membranes in the mast cells. Whether this peptide shows hemolytic activities is controversial, as Lin et al., 2011 and Ho et al., 1991 found a hemolytic activity on sheep, chicken and human erythrocytes, whereas Kim et al., 2016 found no hemolytic activity on human erythrocytes. In vivo, induces edema in the rat paw. The protein is Mastoparan-B of Vespa basalis (Hornet).